We begin with the raw amino-acid sequence, 727 residues long: MGTATAQPALRPQTSTVIGGLHGAAVLDNTGRTVIDVTDFGADPSGKADSAAAVSAAMAHAKTVGGPTTLHFPTGTYHIWPERTPKRELYVSNTVGSDQAFRTKNIGILVEDMRDVVVDGGGSRIVNHGFQTVFAAIRSSDVRFTNFSQTWVAPKTVDITVADAGVVSGQAYRIIDIPETYDYAVEGTSVRWNGERGPATGQPYWTGTNSFDYSQVHDPATNRTWRTSNPVFPERHEDHRPRRRQVRITYGDSTAPGDRGYVYQMREVTRDTPGALFWESSRVTVDHLRLGYLHGFGIVGQLSEDIGIDSVTFKADRGSGRVTSGFADHIQMSGVKGTVRITNSVFDNPQDDPINIHGTYLQATAAERETLQLRYMHNETSGFPQFYPGDTIELVDKRTMLAAPGATAKVVSVTGPTGSGVPAGTDPDTYLRTMTVVLDRTLPAAVLAAPGDYVAENTTYTPTVEITGNTFQAVPTRGILVTTRRPVRIENNRFDGMSMASIYISSDARSWYESGPVRNVTIRGNVFDRPASPVIFFDPTNQDFVAGQPVHRNVLIEDNDFNLTGGTILSGRGVGGLTFRDNRVERYPHLRLTGPSRALRVGDTTTVTTDAPPPSHTSPLFTFDGADDITLANNTYGNGFNKRVNTANMDVSEITVTADGLALNADSISSAPVAVSYSSSRPKVATVDSEGVVKALSGGTTSITARATIGGVRVTSNPVKVVVATER.

The interval 220-241 (ATNRTWRTSNPVFPERHEDHRP) is disordered. Residues 221 to 230 (TNRTWRTSNP) show a composition bias toward polar residues. PbH1 repeat units lie at residues 336–358 (KGTVRITNSVFDNPQDDPINIHG), 461–483 (TPTVEITGNTFQAVPTRGILVTT), 484–506 (RRPVRIENNRFDGMSMASIYISS), 517–538 (VRNVTIRGNVFDRPASPVIFFD), 551–572 (HRNVLIEDNDFNLTGGTILSGR), and 574–603 (VGGLTFRDNRVERYPHLRLTGPSRALRVGD).

Belongs to the glycosyl hydrolase 110 family. A subfamily.

It catalyses the reaction Hydrolysis of terminal, non-reducing branched (1-&gt;3)-alpha-D-galactosidic residues, producing free D-galactose.. The enzyme catalyses Hydrolysis of terminal, non-reducing alpha-D-galactose residues in alpha-D-galactosides, including galactose oligosaccharides, galactomannans and galactolipids.. Alpha-galactosidase that specifically removes branched alpha-1,3-linked galactose residues present in blood group B antigens. Has no activity toward linear alpha-1,3-linked galactose residues. The sequence is that of Alpha-1,3-galactosidase A (glaA) from Peterkaempfera griseoplana (Streptacidiphilus griseoplanus).